The primary structure comprises 396 residues: MAADLRVSIAHQTSFALRLAAALSSPAHPAGGAGRNVAFSPLSLHVALSLVAAGAGGATRDQLASALGGPGSAEGLHAFAEQLVQLVLADASGAGGPRVAFADGVFVDASLSLKKTFGDVAVGKYKAETHSVDFQTKAAEVASQVNSWVEKVTSGLIKEILPPGSVDHTTRLVLGNALYFKGAWTEKFDASKTKDGEFHLLDGKSVQAPFMSTSKKQYILSYDNLKVLKLPYQQGGDKRQFSMYILLPEAQDGLWSLAEKLNSEPEFLEKHIPTRQVTVGQFKLPKFKISFGFEASDLLKSLGLHLPFSSEADLTEMVDSPEGKNLFVSSVFHKSFVEVNEEGTEAAAATAAVITLRSAPIAEDFVADHPFLFLIQEDMTGVVLFVGHVVNPLLAA.

An RCL region spans residues 343–367 (GTEAAAATAAVITLRSAPIAEDFVA).

It belongs to the serpin family.

Probable serine protease inhibitor. The protein is Serpin-ZXA of Oryza sativa subsp. japonica (Rice).